A 181-amino-acid chain; its full sequence is Large ribosomal subunit protein uL6m (181 aa).

It belongs to the universal ribosomal protein uL6 family.

It is found in the mitochondrion. The protein is Large ribosomal subunit protein uL6m (RPL6) of Acanthamoeba castellanii (Amoeba).